Here is a 373-residue protein sequence, read N- to C-terminus: Inhibitor of nuclear factor kappa-B kinase-interacting protein (373 aa).

Positions 1-11 (MSEVKSRKKPG) are enriched in basic residues. The tract at residues 1 to 38 (MSEVKSRKKPGPKVAAPEPEKRSDGRKNPEARGGAGWA) is disordered. Residues 18-30 (EPEKRSDGRKNPE) show a composition bias toward basic and acidic residues. A helical membrane pass occupies residues 43-59 (GLSLLSLATSLGLAWLV). 2 coiled-coil regions span residues 64-257 (EKFA…DKLS) and 290-325 (TERK…LEGI). Asn-151 is a glycosylation site (N-linked (GlcNAc...) asparagine).

N-glycosylated at Asn-151.

It is found in the endoplasmic reticulum membrane. Its function is as follows. Target of p53/TP53 with pro-apoptotic function. The chain is Inhibitor of nuclear factor kappa-B kinase-interacting protein (Ikbip) from Rattus norvegicus (Rat).